The sequence spans 834 residues: Translation factor GUF1 homolog, mitochondrial (834 aa).

The transit peptide at 1–66 (MKLCGVRGSG…RPLLAEPRRY (66 aa)) directs the protein to the mitochondrion. The region spanning 129–314 (ACIRNVSVVA…QIIDKVPPPR (186 aa)) is the tr-type G domain. Residues 138-145 (AHVDHGKT), 205-209 (DTPGH), and 259-262 (TKMD) contribute to the GTP site. Residues 475-507 (ATGPPETASRTKPATAAETASSDDASGSSGSSV) form a disordered region. A compositionally biased stretch (low complexity) spans 488 to 507 (ATAAETASSDDASGSSGSSV).

It belongs to the TRAFAC class translation factor GTPase superfamily. Classic translation factor GTPase family. LepA subfamily.

It is found in the mitochondrion inner membrane. It carries out the reaction GTP + H2O = GDP + phosphate + H(+). In terms of biological role, promotes mitochondrial protein synthesis. May act as a fidelity factor of the translation reaction, by catalyzing a one-codon backward translocation of tRNAs on improperly translocated ribosomes. Binds to mitochondrial ribosomes in a GTP-dependent manner. The polypeptide is Translation factor GUF1 homolog, mitochondrial (Leishmania major).